The sequence spans 295 residues: Lipoyl synthase (295 aa).

[4Fe-4S] cluster-binding residues include cysteine 34, cysteine 39, cysteine 45, cysteine 60, cysteine 64, cysteine 67, and serine 273. A Radical SAM core domain is found at 46–262 (WNKRHATIMV…KRMAYAKGFS (217 aa)).

Belongs to the radical SAM superfamily. Lipoyl synthase family. It depends on [4Fe-4S] cluster as a cofactor.

It localises to the cytoplasm. It carries out the reaction [[Fe-S] cluster scaffold protein carrying a second [4Fe-4S](2+) cluster] + N(6)-octanoyl-L-lysyl-[protein] + 2 oxidized [2Fe-2S]-[ferredoxin] + 2 S-adenosyl-L-methionine + 4 H(+) = [[Fe-S] cluster scaffold protein] + N(6)-[(R)-dihydrolipoyl]-L-lysyl-[protein] + 4 Fe(3+) + 2 hydrogen sulfide + 2 5'-deoxyadenosine + 2 L-methionine + 2 reduced [2Fe-2S]-[ferredoxin]. It participates in protein modification; protein lipoylation via endogenous pathway; protein N(6)-(lipoyl)lysine from octanoyl-[acyl-carrier-protein]: step 2/2. Its function is as follows. Catalyzes the radical-mediated insertion of two sulfur atoms into the C-6 and C-8 positions of the octanoyl moiety bound to the lipoyl domains of lipoate-dependent enzymes, thereby converting the octanoylated domains into lipoylated derivatives. The polypeptide is Lipoyl synthase (Anaplasma phagocytophilum (strain HZ)).